Here is a 290-residue protein sequence, read N- to C-terminus: Light-independent protochlorophyllide reductase iron-sulfur ATP-binding protein (290 aa).

ATP contacts are provided by residues 34–39 and K63; that span reads GIGKST. S38 provides a ligand contact to Mg(2+). [4Fe-4S] cluster contacts are provided by C119 and C153. Residues 204-205 and 228-230 contribute to the ATP site; these read NR and PDL.

It belongs to the NifH/BchL/ChlL family. Homodimer. Protochlorophyllide reductase is composed of three subunits; BchL, BchN and BchB. The cofactor is [4Fe-4S] cluster.

The catalysed reaction is chlorophyllide a + oxidized 2[4Fe-4S]-[ferredoxin] + 2 ADP + 2 phosphate = protochlorophyllide a + reduced 2[4Fe-4S]-[ferredoxin] + 2 ATP + 2 H2O. It participates in porphyrin-containing compound metabolism; bacteriochlorophyll biosynthesis (light-independent). Functionally, component of the dark-operative protochlorophyllide reductase (DPOR) that uses Mg-ATP and reduced ferredoxin to reduce ring D of protochlorophyllide (Pchlide) to form chlorophyllide a (Chlide). This reaction is light-independent. The L component serves as a unique electron donor to the NB-component of the complex, and binds Mg-ATP. The polypeptide is Light-independent protochlorophyllide reductase iron-sulfur ATP-binding protein (Rhodospirillum rubrum).